A 185-amino-acid polypeptide reads, in one-letter code: Ribosome-recycling factor (185 aa).

A disordered region spans residues 140–168; sequence KKEQKDGNITEDEQRNLEKQVQKITDDST.

It belongs to the RRF family.

Its subcellular location is the cytoplasm. Its function is as follows. Responsible for the release of ribosomes from messenger RNA at the termination of protein biosynthesis. May increase the efficiency of translation by recycling ribosomes from one round of translation to another. The polypeptide is Ribosome-recycling factor (Lactobacillus helveticus (strain DPC 4571)).